We begin with the raw amino-acid sequence, 143 residues long: Peptidyl-prolyl cis-trans isomerase B (143 aa).

The PPIase cyclophilin-type domain occupies M1–G143.

The protein belongs to the cyclophilin-type PPIase family.

The protein resides in the cytoplasm. It catalyses the reaction [protein]-peptidylproline (omega=180) = [protein]-peptidylproline (omega=0). With respect to regulation, inhibited by cyclosporin A (CsA). In terms of biological role, PPIases accelerate the folding of proteins. It catalyzes the cis-trans isomerization of proline imidic peptide bonds in oligopeptides. This chain is Peptidyl-prolyl cis-trans isomerase B (ppiB), found in Bacillus subtilis (strain 168).